A 236-amino-acid polypeptide reads, in one-letter code: MATPHINAVEGAFAETMLFPGDPLRAKYIAETFLENVEQVTDVRNMLGFTGTYKGKRISVMGSGMGIPSCSIYATELIRDYGVKNLIRVGTCGAISTDVKVRDVIIGMGACTDSAVNRLRFKGQDFAAIANYELMNAVIESAKVRGTKVRVGNIFSADLFYTPDPQMFDVMEKMGVLGVEMEAAGLYGVAHEFGARALCVVTVSDHIRTGEKTSAEERQTTFNDMIIMTLEAAITL.

Residue His-5 participates in a purine D-ribonucleoside binding. Residues Gly-21, Arg-25, Arg-44, and 88 to 91 (RVGT) each bind phosphate. A purine D-ribonucleoside contacts are provided by residues 180 to 182 (EME) and 204 to 205 (SD). Asp-205 functions as the Proton donor in the catalytic mechanism.

The protein belongs to the PNP/UDP phosphorylase family. Homohexamer; trimer of homodimers.

It carries out the reaction a purine D-ribonucleoside + phosphate = a purine nucleobase + alpha-D-ribose 1-phosphate. It catalyses the reaction a purine 2'-deoxy-D-ribonucleoside + phosphate = a purine nucleobase + 2-deoxy-alpha-D-ribose 1-phosphate. Functionally, catalyzes the reversible phosphorolytic breakdown of the N-glycosidic bond in the beta-(deoxy)ribonucleoside molecules, with the formation of the corresponding free purine bases and pentose-1-phosphate. The protein is Purine nucleoside phosphorylase DeoD-type of Shewanella baltica (strain OS155 / ATCC BAA-1091).